Consider the following 403-residue polypeptide: GPI-N-acetylgalactosamine transferase PGAP4 (403 aa).

Residues 1-22 (MSTSTSPAAMLLRRLRRLSWGS) are Cytoplasmic-facing. Residues 23–43 (TAVQLFILTVVTFGLLAPLAC) traverse the membrane as a helical segment. Over 44 to 259 (HRLLHSYFYL…RLQHYTNPEP (216 aa)) the chain is Lumenal. Val-109 is a UDP-N-acetyl-alpha-D-galactosamine binding site. 2 cysteine pairs are disulfide-bonded: Cys-132–Cys-136 and Cys-144–Cys-194. Residues 211 to 213 (EDD) carry the DXD motif motif. A helical membrane pass occupies residues 260–280 (MRILEWVGVGMLLGPLLTWIY). Residues 281 to 287 (MRFASRP) are Cytoplasmic-facing. A helical membrane pass occupies residues 288–308 (GFSWPVMLFFSLYSMGLVELV). Over 309–403 (GRHYFLELRR…LRYNFHPSLL (95 aa)) the chain is Lumenal. Cys-332 and Cys-333 are disulfide-bonded. UDP-N-acetyl-alpha-D-galactosamine is bound by residues Thr-334, Pro-335, and Lys-362.

This sequence belongs to the PGAP4 family. Glycosylated.

Its subcellular location is the golgi apparatus membrane. Its function is as follows. Golgi-resident glycosylphosphatidylinositol (GPI)-N-acetylgalactosamine transferase that catalyzes the N-acetyl-beta-D-galactosamine transfer from an UDP-N-acetyl-alpha-D-galactosamine to the 4-OH-position of first mannose of the glycosylphosphatidylinositol (GPI) of a GPI-anchored protein (GPI-AP). This modification occurs after the fatty acid remodeling step of the GPI-anchor maturation. The polypeptide is GPI-N-acetylgalactosamine transferase PGAP4 (Pongo abelii (Sumatran orangutan)).